The primary structure comprises 3414 residues: Genome polyprotein (3414 aa).

The interval 1 to 27 is disordered; sequence MAGKAVLKGKGGGPPRRASKVAPKKTR. At 1–98 the chain is on the cytoplasmic side; that stretch reads MAGKAVLKGK…LHRRGSRRTT (98 aa). Residues 17–27 show a composition bias toward basic residues; it reads RASKVAPKKTR. Positions 97–117 are cleaved as a propeptide — ER anchor for the capsid protein C, removed in mature form by serine protease NS3; sequence TTIDWMTPLLITVMLGMCLTA. A helical membrane pass occupies residues 99-117; sequence IDWMTPLLITVMLGMCLTA. The Extracellular segment spans residues 118–242; the sequence is TVRRERDGSM…HLTRVEGWVW (125 aa). The N-linked (GlcNAc...) asparagine; by host glycan is linked to N144. Residues 243-260 traverse the membrane as a helical segment; sequence KNKLFTLSLVMVAWLMVD. A topological domain (cytoplasmic) is located at residue G261. A helical membrane pass occupies residues 262–280; the sequence is LLPRILIVVVALALVPAYA. Over 281-727 the chain is Extracellular; the sequence is SRCTHLENRD…HTVLGGAFNT (447 aa). 6 cysteine pairs are disulfide-bonded: C283–C310, C340–C396, C340–C401, C354–C385, C372–C396, and C372–C401. The tract at residues 378 to 391 is fusion peptide; that stretch reads DRGWGNHCGLFGKG. N-linked (GlcNAc...) asparagine; by host glycosylation is present at N434. 2 disulfides stabilise this stretch: C466–C570 and C587–C618. Residues 728 to 748 traverse the membrane as a helical segment; the sequence is LLGGVGFLPKILLGVAMAWLG. The Cytoplasmic segment spans residues 749–755; sequence LNMRNPT. A helical membrane pass occupies residues 756–776; the sequence is LSMGFLLSGGLVLAMTLGVGA. The Extracellular segment spans residues 777–1187; that stretch reads DVGCAVDTER…LVSVESLFRY (411 aa). 6 cysteine pairs are disulfide-bonded: C780-C791, C831-C920, C955-C1000, C1057-C1106, C1068-C1090, and C1089-C1093. Residues N861, N983, and N999 are each glycosylated (N-linked (GlcNAc...) asparagine; by host). The helical transmembrane segment at 1188 to 1208 threads the bilayer; sequence LVAVGLVFQLELGPEAVAMVL. The Cytoplasmic segment spans residues 1209 to 1232; it reads LQAVFEMRTCLLSGFVLRRSITTR. Residues 1233–1253 form a helical membrane-spanning segment; it reads EIVTVYFLLLVLEMGIPVKGL. Topologically, residues 1254–1267 are lumenal; the sequence is EHLWRWTDALAMGA. A helical transmembrane segment spans residues 1268–1288; it reads IIFRACTAEGKTGIGLLLAAF. Over 1289-1300 the chain is Cytoplasmic; sequence MTQSDMNIIHDG. A helical membrane pass occupies residues 1301–1319; the sequence is LTAFLCVATTMAIWRYIRG. At 1320–1325 the chain is on the lumenal side; sequence QGERKG. Residues 1326–1346 traverse the membrane as a helical segment; it reads LTWIVPLAGILGGEGSGVRLL. The Cytoplasmic portion of the chain corresponds to 1347–1359; the sequence is AFWELAASRGRRS. Residues 1360-1378 traverse the membrane as a helical segment; sequence FNEPMTVIGVMLTLASGMM. The Lumenal segment spans residues 1379–1382; the sequence is RHTS. Residues 1383 to 1403 traverse the membrane as a helical segment; it reads QEAVCAMALAAFLLLMLTLGT. At 1404–1454 the chain is on the cytoplasmic side; that stretch reads RKMQLLAEWSGNIEWNPELTSEGGEVSLRVRQDALGNLHLTELEKEERMMA. The interval 1410–1449 is interacts with and activates NS3 protease; the sequence is AEWSGNIEWNPELTSEGGEVSLRVRQDALGNLHLTELEKE. The segment at residues 1455 to 1475 is an intramembrane region (helical); the sequence is FWLVVGLIASAFHWSGILIVM. At 1476–2160 the chain is on the cytoplasmic side; that stretch reads GLWTISEMLG…RIGERDAPEA (685 aa). One can recognise a Peptidase S7 domain in the interval 1490–1669; sequence TDLVFSGCSE…EVEKSRPNLP (180 aa). Catalysis depends on charge relay system; for serine protease NS3 activity residues H1543, D1567, and S1627. Positions 1675-1831 constitute a Helicase ATP-binding domain; the sequence is TGWTAKGQIT…ESNGAIASEE (157 aa). 1688–1695 contacts ATP; sequence MHPGSGKT. Positions 1779–1782 match the DEAH box motif; sequence DEAH. Residues 1841 to 2000 enclose the Helicase C-terminal domain; that stretch reads DGFDWITEYE…TARGPVATFY (160 aa). K1883 is subject to N6-acetyllysine; by host. The helical transmembrane segment at 2161–2181 threads the bilayer; the sequence is FLTAVEMLVLGLATLGVVWCF. Over 2182-2189 the chain is Lumenal; the sequence is VVRTSVSR. Positions 2190-2209 form an intramembrane region, helical; that stretch reads MVLGTLVLATSLIFLWAGGV. Residue G2210 is a topological domain, lumenal. Residues 2211–2231 form a helical membrane-spanning segment; the sequence is YGNMAGVALVFYTLLTVLQPE. The Cytoplasmic segment spans residues 2232–2238; it reads TGKQRSS. Residues 2239–2259 traverse the membrane as a helical segment; sequence DDNKLAYFLLTLCGLAGMVAA. The Lumenal portion of the chain corresponds to 2260–2296; that stretch reads NEMGLLEKTKADLAALFARDQGETVRWGEWTNLDIQP. The helical intramembrane region spans 2297-2315; the sequence is ARSWGTYVLVVSLFTPYML. Over 2316-2343 the chain is Lumenal; that stretch reads HQLQTRIQQLVNSAVASGAQAMRDLGGG. Residues 2344–2364 constitute an intramembrane region (helical); it reads TPFFGVAGHVLALGVASLVGA. At 2365–2368 the chain is on the lumenal side; it reads TPTS. A helical membrane pass occupies residues 2369-2389; the sequence is LILGVGLAAFHLAIVVSGLEA. Topologically, residues 2390 to 2432 are cytoplasmic; that stretch reads ELTQRAHKVFFSAMVRNPMVDGDVINPFGDGEAKPALYERKLS. A helical transmembrane segment spans residues 2433 to 2453; sequence LILALVLCLASVVMNRTFVAV. Residues 2454–2477 lie on the Lumenal side of the membrane; the sequence is TEAGAVGVAAAMQLLRPEMDVLWT. The helical transmembrane segment at 2478–2498 threads the bilayer; the sequence is MPVACGMSGVVRGSLWGLLPL. The Cytoplasmic segment spans residues 2499–3414; sequence GHRLWLRTTG…WELKLESSIF (916 aa). One can recognise an mRNA cap 0-1 NS5-type MT domain in the interval 2512-2776; it reads GGSEGDTLGD…EIDLGVGTRS (265 aa). S-adenosyl-L-methionine is bound at residue S2567. S2567 is modified (phosphoserine). K2572 acts as the For 2'-O-MTase activity in catalysis. The S-adenosyl-L-methionine site is built by G2597, W2598, T2615, I2616, D2642, and V2643. D2657 (for 2'-O-MTase activity) is an active-site residue. I2658 is an S-adenosyl-L-methionine binding site. Catalysis depends on for 2'-O-MTase activity residues K2694 and E2730. Residues 2730-2734 form an interaction with host SCRIB region; sequence EMYFS. S-adenosyl-L-methionine is bound at residue Y2732. Positions 2950, 2954, 2959, and 2962 each coordinate Zn(2+). One can recognise a RdRp catalytic domain in the interval 3040–3189; sequence GLFYADDTAG…RPVDDRFSKA (150 aa). 3 residues coordinate Zn(2+): H3224, C3240, and C3359.

In the N-terminal section; belongs to the class I-like SAM-binding methyltransferase superfamily. mRNA cap 0-1 NS5-type methyltransferase family. As to quaternary structure, homodimer. Interacts (via N-terminus) with host EXOC1 (via C-terminus); this interaction results in EXOC1 degradation through the proteasome degradation pathway. Forms heterodimers with envelope protein E in the endoplasmic reticulum and Golgi. In terms of assembly, homodimer; in the endoplasmic reticulum and Golgi. Interacts with protein prM. Interacts with non-structural protein 1. As to quaternary structure, homodimer; Homohexamer when secreted. Interacts with envelope protein E. Interacts (via N-terminus) with serine protease NS3. In terms of assembly, forms a heterodimer with serine protease NS3. May form homooligomers. As to quaternary structure, forms a heterodimer with NS2B. Interacts with non-structural protein 2A (via N-terminus). Interacts with NS4B. Interacts with unphosphorylated RNA-directed RNA polymerase NS5; this interaction stimulates RNA-directed RNA polymerase NS5 guanylyltransferase activity. Interacts with serine protease NS3. Interacts with NS1. In terms of assembly, homodimer. Interacts with host STAT2; this interaction inhibits the phosphorylation of the latter, and, when all viral proteins are present (polyprotein), targets STAT2 for degradation. Interacts with serine protease NS3. Interacts with host SCRIB; this interaction targets NS5 to the cell membrane periphery and nucleus, thereby allowing efficient host nuclear STAT1 inhibition. In terms of processing, specific enzymatic cleavages in vivo yield mature proteins. Cleavages in the lumen of endoplasmic reticulum are performed by host signal peptidase, whereas cleavages in the cytoplasmic side are performed by serine protease NS3. Signal cleavage at the 2K-4B site requires a prior NS3 protease-mediated cleavage at the 4A-2K site. Cleaved in post-Golgi vesicles by a host furin, releasing the mature small envelope protein M, and peptide pr. This cleavage is incomplete as up to 30% of viral particles still carry uncleaved prM. Post-translationally, N-glycosylated. In terms of processing, N-glycosylated. The excreted form is glycosylated and this is required for efficient secretion of the protein from infected cells. Acetylated by host KAT5. Acetylation modulates NS3 RNA-binding and unwinding activities and plays an important positive role for viral replication. Post-translationally, phosphorylated on serines residues. This phosphorylation may trigger NS5 nuclear localization.

The protein resides in the virion. It localises to the host nucleus. It is found in the host cytoplasm. The protein localises to the host perinuclear region. Its subcellular location is the secreted. The protein resides in the virion membrane. It localises to the host endoplasmic reticulum membrane. It catalyses the reaction Selective hydrolysis of -Xaa-Xaa-|-Yaa- bonds in which each of the Xaa can be either Arg or Lys and Yaa can be either Ser or Ala.. The catalysed reaction is RNA(n) + a ribonucleoside 5'-triphosphate = RNA(n+1) + diphosphate. The enzyme catalyses a ribonucleoside 5'-triphosphate + H2O = a ribonucleoside 5'-diphosphate + phosphate + H(+). It carries out the reaction ATP + H2O = ADP + phosphate + H(+). It catalyses the reaction a 5'-end (5'-triphosphoguanosine)-ribonucleoside in mRNA + S-adenosyl-L-methionine = a 5'-end (N(7)-methyl 5'-triphosphoguanosine)-ribonucleoside in mRNA + S-adenosyl-L-homocysteine. The catalysed reaction is a 5'-end (N(7)-methyl 5'-triphosphoguanosine)-ribonucleoside in mRNA + S-adenosyl-L-methionine = a 5'-end (N(7)-methyl 5'-triphosphoguanosine)-(2'-O-methyl-ribonucleoside) in mRNA + S-adenosyl-L-homocysteine + H(+). Its function is as follows. Plays a role in virus budding by binding to membrane and gathering the viral RNA into a nucleocapsid that forms the core of a mature virus particle. During virus entry, may induce genome penetration in host cytoplasm after hemifusion induced by surface proteins. Can migrate to the cell nucleus where it modulates host functions. Inhibits RNA silencing by interfering with host Dicer. Functionally, prevents premature fusion activity of envelope proteins in trans-Golgi by binding to envelope protein E at pH6.0. After virion release in extracellular space gets dissociated from E dimers. In terms of biological role, acts as a chaperone for envelope protein E during intracellular virion assembly by masking and inactivating envelope protein E fusion peptide. prM is the only viral peptide matured by host furin in the trans-Golgi network. Presumably to avoid catastrophic activation of the viral fusion activity in acidic GolGi compartment prior to virion release. prM-E cleavage is ineficient, and many virions are only partially matured. These uncleaved prM would play a role in immune evasion. Its function is as follows. May play a role in virus budding. Exerts cytotoxic effects by activating a mitochondrial apoptotic pathway through M extodomain. May display a viroporin activity. Binds to host cell surface receptor and mediates fusion between viral and cellular membranes. Envelope protein is synthesized in the endoplasmic reticulum in the form of heterodimer with protein prM. They play a role in virion budding in the ER, and the newly formed immature particle is covered with 60 spikes composed of heterodimer between precursor prM and envelope protein E. The virion is transported to the Golgi apparatus where the low pH causes dissociation of PrM-E heterodimers and formation of E homodimers. prM-E cleavage is ineficient, and many virions are only partially matured. These uncleaved prM would play a role in immune evasion. Functionally, involved in immune evasion, pathogenesis and viral replication. Once cleaved off the polyprotein, is targeted to three destinations: the viral replication cycle, the plasma membrane and the extracellular compartment. Essential for viral replication. Required for formation of the replication complex and recruitment of other non-structural proteins to the ER-derived membrane structures. Excreted as a hexameric lipoparticle that plays a role against host immune response. Antagonizing the complement function. Binds to the host macrophages and dendritic cells. Inhibits signal transduction originating from Toll-like receptor 3 (TLR3). In terms of biological role, component of the viral RNA replication complex that functions in virion assembly and antagonizes the host immune response. Its function is as follows. Required cofactor for the serine protease function of NS3. May have membrane-destabilizing activity and form viroporins. Displays three enzymatic activities: serine protease, NTPase and RNA helicase. NS3 serine protease, in association with NS2B, performs its autocleavage and cleaves the polyprotein at dibasic sites in the cytoplasm: C-prM, NS2A-NS2B, NS2B-NS3, NS3-NS4A, NS4A-2K and NS4B-NS5. NS3 RNA helicase binds RNA and unwinds dsRNA in the 3' to 5' direction. Functionally, regulates the ATPase activity of the NS3 helicase activity. NS4A allows NS3 helicase to conserve energy during unwinding. In terms of biological role, functions as a signal peptide for NS4B and is required for the interferon antagonism activity of the latter. Its function is as follows. Induces the formation of ER-derived membrane vesicles where the viral replication takes place. Inhibits interferon (IFN)-induced host STAT1 phosphorylation and nuclear translocation, thereby preventing the establishment of cellular antiviral state by blocking the IFN-alpha/beta pathway. Inhibits STAT2 translocation in the nucleus after IFN-alpha treatment. Replicates the viral (+) and (-) genome, and performs the capping of genomes in the cytoplasm. NS5 methylates viral RNA cap at guanine N-7 and ribose 2'-O positions. Besides its role in genome replication, also prevents the establishment of cellular antiviral state by blocking the interferon-alpha/beta (IFN-alpha/beta) signaling pathway. Inhibits host TYK2 and STAT2 phosphorylation, thereby preventing activation of JAK-STAT signaling pathway. In Homo sapiens (Human), this protein is Genome polyprotein.